A 352-amino-acid polypeptide reads, in one-letter code: 7,8-didemethyl-8-hydroxy-5-deazariboflavin synthase (352 aa).

In terms of domain architecture, Radical SAM core spans 35 to 275; that stretch reads ITFSKNAFIP…EDISIQVPPN (241 aa). Positions 49, 53, and 56 each coordinate [4Fe-4S] cluster.

This sequence belongs to the radical SAM superfamily. CofG family. Consists of two subunits, CofG and CofH. [4Fe-4S] cluster is required as a cofactor.

It catalyses the reaction 5-amino-5-(4-hydroxybenzyl)-6-(D-ribitylimino)-5,6-dihydrouracil + S-adenosyl-L-methionine = 7,8-didemethyl-8-hydroxy-5-deazariboflavin + 5'-deoxyadenosine + L-methionine + NH4(+) + H(+). The protein operates within cofactor biosynthesis; coenzyme F0 biosynthesis. In terms of biological role, catalyzes the radical-mediated synthesis of 7,8-didemethyl-8-hydroxy-5-deazariboflavin from 5-amino-5-(4-hydroxybenzyl)-6-(D-ribitylimino)-5,6-dihydrouracil. The sequence is that of 7,8-didemethyl-8-hydroxy-5-deazariboflavin synthase from Methanococcus maripaludis (strain C6 / ATCC BAA-1332).